A 618-amino-acid chain; its full sequence is Nuclear cap-binding protein subunit 3 (618 aa).

The interval 1 to 53 (MAAVRGLRVSVKAGGGAEPEPMEVEEGEVEAAAGRTSPVEATADQTSPREVVP) is disordered. Over residues 20–29 (EPMEVEEGEV) the composition is skewed to acidic residues. The tract at residues 117–178 (ETLYICGVDE…LSSKPTNEKG (62 aa)) is RNA recognition motif (RRM) domain. The WLDD motif; essential for 7-methylguanosine-containing mRNA cap binding motif lies at 146–149 (WLDD). Disordered regions lie at residues 170–250 (SSKP…DLRP), 342–366 (PEEP…DDRV), and 426–618 (QLKT…DTDS). A compositionally biased stretch (basic and acidic residues) spans 174-188 (TNEKGQRKKDGEHRS). Residues 205-223 (DETEEGEVEEDNPNDAEVE) show a composition bias toward acidic residues. The span at 231–240 (PPETLSQAEQ) shows a compositional bias: polar residues. The segment covering 344 to 365 (EPIEEEEEEEEEEEEDMDEDDR) has biased composition (acidic residues). Residues 436-450 (SDSAGNSVKSRIGSK) show a composition bias toward polar residues. The segment covering 451 to 468 (SHSEKPADVRLILEEKRQ) has biased composition (basic and acidic residues). Residues 469 to 481 (STASRQQSSSSGK) show a composition bias toward low complexity. Composition is skewed to basic and acidic residues over residues 507 to 517 (SRREPLSDVHS), 550 to 562 (PKEK…KSGE), and 583 to 596 (IKEK…KSRL). A compositionally biased stretch (low complexity) spans 609–618 (ESSSGSDTDS).

It belongs to the NCBP3 family. In terms of assembly, component of an alternative cap-binding complex (CBC) composed of NCBP1/CBP80 and NCBP3.

The protein resides in the nucleus. It is found in the cytoplasm. In terms of biological role, associates with NCBP1/CBP80 to form an alternative cap-binding complex (CBC) which plays a key role in mRNA export. NCBP3 serves as adapter protein linking the capped RNAs (m7GpppG-capped RNA) to NCBP1/CBP80. Unlike the conventional CBC with NCBP2 which binds both small nuclear RNA (snRNA) and messenger (mRNA) and is involved in their export from the nucleus, the alternative CBC with NCBP3 does not bind snRNA and associates only with mRNA thereby playing a role in only mRNA export. The polypeptide is Nuclear cap-binding protein subunit 3 (Xenopus laevis (African clawed frog)).